We begin with the raw amino-acid sequence, 220 residues long: Probable L-serine dehydratase, beta chain (220 aa).

Positions 148–220 (AILVVHNDKF…NIIQVTKIAD (73 aa)) constitute an ACT domain.

Belongs to the iron-sulfur dependent L-serine dehydratase family. As to quaternary structure, heterodimer of an alpha chain and a beta chain. [4Fe-4S] cluster serves as cofactor.

It carries out the reaction L-serine = pyruvate + NH4(+). The protein operates within carbohydrate biosynthesis; gluconeogenesis. The sequence is that of Probable L-serine dehydratase, beta chain (sdaAB) from Bacillus subtilis (strain 168).